Consider the following 102-residue polypeptide: Type IV secretion system protein PtlA homolog (102 aa).

The signal sequence occupies residues 1 to 31; sequence MNRLKDLGTPRPRLAFMAACILLLATLPDFA. A run of 2 helical transmembrane segments spans residues 45–65 and 77–97; these read AGIV…AIIW and VLDV…AEIA.

This sequence belongs to the PtlA family.

It is found in the cell membrane. This chain is Type IV secretion system protein PtlA homolog (ptlA), found in Bordetella bronchiseptica (strain ATCC BAA-588 / NCTC 13252 / RB50) (Alcaligenes bronchisepticus).